Consider the following 314-residue polypeptide: Olfactory receptor 5P67 (314 aa).

The Extracellular segment spans residues 1–28 (MAFLEDGNHTAVTEFILLGLTDDPVLRV). Residue Asn-8 is glycosylated (N-linked (GlcNAc...) asparagine). The chain crosses the membrane as a helical span at residues 29–49 (ILFTIILCIYLVTVSGNLSTI). Residues 50-57 (LLIRVSSQ) are Cytoplasmic-facing. Residues 58 to 78 (LHHPMYFFLSHVGSVDIGYSS) traverse the membrane as a helical segment. Topologically, residues 79-102 (SVTPNMLVNFLVEKHTIAYLGCGI) are extracellular. Cysteines 100 and 192 form a disulfide. The helical transmembrane segment at 103–123 (QLSSAAFFGTAECFLLATMAY) threads the bilayer. Over 124 to 136 (DRFVAICNPLLYS) the chain is Cytoplasmic. The chain crosses the membrane as a helical span at residues 137–157 (TKMSTQTCIQLVVGSYTGGIL). Topologically, residues 158–199 (NASFAIISFFSFLFCGPNRINHFYCDFAPLVELSCSDINVSV) are extracellular. The chain crosses the membrane as a helical span at residues 200–220 (VITTIFSASVTIITVFVIAIS). Topologically, residues 221 to 240 (YTYILITILKMRSTEGRHKA) are cytoplasmic. Residues 241 to 261 (FSTCTSYLTAVTLFYGTVTFI) traverse the membrane as a helical segment. At 262 to 274 (YVVPKSNYSTDQN) the chain is on the extracellular side. Asn-268 carries N-linked (GlcNAc...) asparagine glycosylation. A helical membrane pass occupies residues 275–295 (KVASVFYIVVIPMLNPLIYSL). The Cytoplasmic segment spans residues 296 to 314 (RNNDIKGALKRQLGKKTFS).

Belongs to the G-protein coupled receptor 1 family.

Its subcellular location is the cell membrane. Potential odorant receptor. In Mus musculus (Mouse), this protein is Olfactory receptor 5P67.